The sequence spans 283 residues: NAD kinase (283 aa).

The Proton acceptor role is filled by D69. Residues D69–G70, N138–E139, K166, D168, L176, T179–S184, and Q235 contribute to the NAD(+) site.

Belongs to the NAD kinase family. A divalent metal cation serves as cofactor.

The protein resides in the cytoplasm. It carries out the reaction NAD(+) + ATP = ADP + NADP(+) + H(+). Functionally, involved in the regulation of the intracellular balance of NAD and NADP, and is a key enzyme in the biosynthesis of NADP. Catalyzes specifically the phosphorylation on 2'-hydroxyl of the adenosine moiety of NAD to yield NADP. This is NAD kinase from Helicobacter acinonychis (strain Sheeba).